The following is a 589-amino-acid chain: Cyclohexane-1,2-dione hydrolase (589 aa).

Thiamine diphosphate is bound at residue glutamate 52. The interval 400-480 (NHTLPMFGGA…VITMVFTNES (81 aa)) is thiamine pyrophosphate binding. Residues aspartate 451 and asparagine 478 each coordinate Mg(2+).

Belongs to the TPP enzyme family. As to quaternary structure, homodimer. Mg(2+) serves as cofactor. It depends on thiamine diphosphate as a cofactor. Requires FAD as cofactor.

The enzyme catalyses cyclohexan-1,2-dione + H2O = 6-oxohexanoate + H(+). Catalyzes the ring-opening cleavage of the alicyclic alcohol cyclohexane-1,2-dione. The polypeptide is Cyclohexane-1,2-dione hydrolase (Azoarcus sp).